Here is a 736-residue protein sequence, read N- to C-terminus: RNA-binding protein RMD9-like, mitochondrial (736 aa).

3 disordered regions span residues 1–28 (MFRFAQPANVLKGKAPSQIVPPHPKTNS), 124–148 (PRRSNMRNNGNNNMNNGRRTEHPNT), and 566–618 (NRGI…GTPV). A mitochondrion-targeting transit peptide spans 1 to 79 (MFRFAQPANV…HFKNQFSSRN (79 aa)). Over residues 125–140 (RRSNMRNNGNNNMNNG) the composition is skewed to low complexity. The span at 566 to 578 (NRGISSSSPMSAV) shows a compositional bias: polar residues. Residues 579–596 (NSLAPSTTNTPSPSLSPI) show a composition bias toward low complexity. Over residues 602-613 (LSSARNTPNKIW) the composition is skewed to polar residues.

This sequence belongs to the RMD9 family. Monomer. Post-translationally, phosphorylated. Phosphorylation promotes binding to RNA.

It localises to the mitochondrion inner membrane. In terms of biological role, may be involved in the processing or stability of mitochondrial mRNAs. This chain is RNA-binding protein RMD9-like, mitochondrial, found in Candida glabrata (strain ATCC 2001 / BCRC 20586 / JCM 3761 / NBRC 0622 / NRRL Y-65 / CBS 138) (Yeast).